A 160-amino-acid polypeptide reads, in one-letter code: Phosphopantetheine adenylyltransferase (160 aa).

Substrate is bound at residue Thr10. ATP contacts are provided by residues 10-11 (TF) and His18. The substrate site is built by Lys42, Met74, and Arg88. ATP contacts are provided by residues 89–91 (GLR), Glu99, and 124–130 (LSFLSSS).

Belongs to the bacterial CoaD family. Homohexamer. Mg(2+) serves as cofactor.

The protein resides in the cytoplasm. It catalyses the reaction (R)-4'-phosphopantetheine + ATP + H(+) = 3'-dephospho-CoA + diphosphate. It functions in the pathway cofactor biosynthesis; coenzyme A biosynthesis; CoA from (R)-pantothenate: step 4/5. Reversibly transfers an adenylyl group from ATP to 4'-phosphopantetheine, yielding dephospho-CoA (dPCoA) and pyrophosphate. In Photorhabdus laumondii subsp. laumondii (strain DSM 15139 / CIP 105565 / TT01) (Photorhabdus luminescens subsp. laumondii), this protein is Phosphopantetheine adenylyltransferase.